The following is a 241-amino-acid chain: uncharacterized protein (241 aa).

This is an uncharacterized protein from Saccharolobus islandicus (Sulfolobus islandicus).